A 137-amino-acid polypeptide reads, in one-letter code: Peptide methionine sulfoxide reductase MsrB (137 aa).

Positions 7–129 (AEELKKNLSE…NSASLRFTDG (123 aa)) constitute a MsrB domain. Cysteine 46, cysteine 49, cysteine 95, and cysteine 98 together coordinate Zn(2+). Cysteine 118 serves as the catalytic Nucleophile.

The protein belongs to the MsrB Met sulfoxide reductase family. Zn(2+) is required as a cofactor.

The enzyme catalyses L-methionyl-[protein] + [thioredoxin]-disulfide + H2O = L-methionyl-(R)-S-oxide-[protein] + [thioredoxin]-dithiol. The polypeptide is Peptide methionine sulfoxide reductase MsrB (Escherichia coli O8 (strain IAI1)).